Consider the following 837-residue polypeptide: Exonuclease 1 (837 aa).

Residues 1 to 99 are N-domain; the sequence is MGIQGLLQFI…RSRRERRQSN (99 aa). Asp-30, Asp-78, Glu-150, Asp-152, Asp-171, Asp-173, and Asp-225 together coordinate Mg(2+). An interaction with MSH3 region spans residues 129–386; the sequence is MAHKVIKAAR…RLEVNSVSHA (258 aa). The tract at residues 138-229 is I-domain; that stretch reads RALGVDCLVA…ILSGCDYLAS (92 aa). Disordered stretches follow at residues 345–367 and 440–477; these read TMPA…PGTN and IKEN…PSKM. The interaction with MLH1 stretch occupies residues 387 to 488; the sequence is PQLKEKPSTL…NKFATFLQRR (102 aa). The segment covering 449–462 has biased composition (polar residues); sequence TSPNSSKMSKSCPD. Position 480 is an N6-acetyllysine (Lys-480). The disordered stretch occupies residues 555–589; the sequence is NGTHNLSSQIPGNAAVSPEDEAQSSETSKLLGAMS. A compositionally biased stretch (polar residues) spans 556–565; it reads GTHNLSSQIP. Ser-589 and Ser-601 each carry phosphoserine. Residues 591–837 are interaction with MSH2; the sequence is PSLGTLRSCF…CVRAQRAIFH (247 aa). The disordered stretch occupies residues 608-740; it reads EFSRTPSPSA…GLCRSSSMDS (133 aa). 3 stretches are compositionally biased toward polar residues: residues 611–623, 665–690, and 699–713; these read RTPS…TLQQ, SSRS…SSRD, and NNKS…NSKQ. A Phosphothreonine modification is found at Thr-612. Residues Ser-614 and Ser-666 each carry the phosphoserine modification. A Phosphoserine modification is found at Ser-737. The tract at residues 778–837 is interaction with MLH1; it reads LQTKISELWKNFGFKKDSEKLPSCKKPLSPVKDNIQLTPETEDEIFNKPECVRAQRAIFH.

The protein belongs to the XPG/RAD2 endonuclease family. EXO1 subfamily. As to quaternary structure, interacts with the MLH1-PMS2 heterodimer via MLH1. Interacts with MSH3. Interacts with the MSH2-MSH6 heterodimer via MSH2, and this interaction may increase the processivity of the 5'-&gt;3' exonuclease activity. Interacts with PCNA, and this interaction may both stimulate the cryptic 3'-&gt;5' exonuclease activity and suppress the 5'-&gt;3' exonuclease activity. Interacts with WRN, and this interaction stimulates both the 5'-&gt;3' exonuclease activity and cleavage of 5'-overhanging flap structures. Interacts with RECQL/RECQ1, and this interaction stimulates cleavage of 5'-overhanging flap structures. Interacts with DNA helicase ZGRF1; the interaction is increased following DNA damage induction. It depends on Mg(2+) as a cofactor. Post-translationally, phosphorylated upon DNA damage and in response to agents stalling DNA replication, probably by ATM or ATR. In terms of tissue distribution, highly expressed in the spleen and testis. Also expressed in the bone marrow, brain, lung, lymph node and thymus.

The protein resides in the nucleus. In terms of biological role, 5'-&gt;3' double-stranded DNA exonuclease which may also possess a cryptic 3'-&gt;5' double-stranded DNA exonuclease activity. Functions in DNA mismatch repair (MMR) to excise mismatch-containing DNA tracts directed by strand breaks located either 5' or 3' to the mismatch. Also exhibits endonuclease activity against 5'-overhanging flap structures similar to those generated by displacement synthesis when DNA polymerase encounters the 5'-end of a downstream Okazaki fragment. Required for somatic hypermutation (SHM) and class switch recombination (CSR) of immunoglobulin genes. Essential for male and female meiosis. The polypeptide is Exonuclease 1 (Exo1) (Mus musculus (Mouse)).